A 582-amino-acid chain; its full sequence is MLNDKDLSTWQTFRRLWPMISPFKTGLIVAAIALILNAASDTFMLSLLKPLLDDGFGKANSNILVWMPLVVIGLMVLRGVSGFVSSYCVSWVSGKVIMNMRRRLFNHMMDMPVSFFDQQSTGTLLSRITYDSEQVASSSSGALITVIREGASIIGLFAMMFYYSWQLSLILVVIAPVVSFAIRQVSKRFRQISKRMQNTMGQVTTSAEQMLKGHKEVLIFGGQKVENERFNSVSNRMRQQGMKMVAASSVSDPLIQFIASLALAFVLYAASFPSVMETLTAGTITVVFSSMIALMRPLKSLTNVNAQFQRGMAACQTLFSILDMETEKDEGTVEVERVKGDIAFDHVTFSYPGKETPSLHDISLSIPTGHTVALVGRSGSGKSTIANLLTRFYDIQQGQILLDGTDLRAYKLASLRNQVALVSQNVHLFNDTIANNIAYARKATYSRKQIENAARMAYAMDFIEKMDQGLDTVIGENGVLLSGGQRQRIAIARALLRDCPILILDEATSALDTESERAIQKALDALQKNRTSLVIAHRLSTIEKADEILVVVEGRIVERGNHEELMSRQGVYAQLHQLQFGQ.

Transmembrane regions (helical) follow at residues 16–36 (LWPMISPFKTGLIVAAIALIL), 63–83 (ILVWMPLVVIGLMVLRGVSGF), 153–173 (IIGLFAMMFYYSWQLSLILVV), 253–273 (PLIQFIASLALAFVLYAASFP), and 275–295 (VMETLTAGTITVVFSSMIALM). Residues 28-310 (IVAAIALILN…LTNVNAQFQR (283 aa)) form the ABC transmembrane type-1 domain. Residues 342–578 (IAFDHVTFSY…QGVYAQLHQL (237 aa)) enclose the ABC transporter domain. 376–383 (GRSGSGKS) contacts ATP.

The protein belongs to the ABC transporter superfamily. Lipid exporter (TC 3.A.1.106) family. In terms of assembly, homodimer.

It localises to the cell inner membrane. It carries out the reaction ATP + H2O + lipid A-core oligosaccharideSide 1 = ADP + phosphate + lipid A-core oligosaccharideSide 2.. Functionally, involved in lipopolysaccharide (LPS) biosynthesis. Translocates lipid A-core from the inner to the outer leaflet of the inner membrane. Transmembrane domains (TMD) form a pore in the inner membrane and the ATP-binding domain (NBD) is responsible for energy generation. In Sodalis glossinidius (strain morsitans), this protein is ATP-dependent lipid A-core flippase.